The sequence spans 383 residues: Transposase InsI for insertion sequence element IS30C (383 aa).

An Integrase catalytic domain is found at Val213–Val379.

This sequence belongs to the transposase IS30 family.

Functionally, required for the transposition of the insertion element. The chain is Transposase InsI for insertion sequence element IS30C (insI3) from Escherichia coli (strain K12).